We begin with the raw amino-acid sequence, 504 residues long: Maturase K (504 aa).

The protein belongs to the intron maturase 2 family. MatK subfamily.

The protein resides in the plastid. The protein localises to the chloroplast. Usually encoded in the trnK tRNA gene intron. Probably assists in splicing its own and other chloroplast group II introns. The polypeptide is Maturase K (Quercus suber (Cork oak)).